We begin with the raw amino-acid sequence, 433 residues long: Tol-Pal system protein TolB (433 aa).

An N-terminal signal peptide occupies residues 1–26 (MSLMTKLGFRALVASCLIAAGGAAHA).

The protein belongs to the TolB family. As to quaternary structure, the Tol-Pal system is composed of five core proteins: the inner membrane proteins TolA, TolQ and TolR, the periplasmic protein TolB and the outer membrane protein Pal. They form a network linking the inner and outer membranes and the peptidoglycan layer.

The protein localises to the periplasm. In terms of biological role, part of the Tol-Pal system, which plays a role in outer membrane invagination during cell division and is important for maintaining outer membrane integrity. The sequence is that of Tol-Pal system protein TolB from Burkholderia pseudomallei (strain 1710b).